The sequence spans 454 residues: MRLTRAVTNPPWTVDVVVVGAGFAGLAAARELTRQGHEVLVFEGRDRVGGRSLTGRVAGVPADMGGSFIGPTQDAVLALATELGIPTTPTHRDGRNVIQWRGSARSYRGTIPKLSLTGLIDIGRLRWQFERIARGVPVAAPWDARRARELDDVSLGEWLRLVRATSSSRNLMAIMTRVTWGCEPDDVSMLHAARYVRAAGGLDRLLDVKNGAQQDRVPGGTQQIAQAAAAQLGARVLLNAAVRRIDRHGAGVTVTSDQGQAEAGFVIVAIPPAHRVAIEFDPPLPPEYQQLAHHWPQGRLSKAYAAYSTPFWRASGYSGQALSDEAPVFITFDVSPHADGPGILMGFVDARGFDSLPIEERRRDALRCFASLFGDEALDPLDYVDYRWGTEEFAPGGPTAAVPPGSWTKYGHWLREPVGPIHWASTETADEWTGYFDGAVRSGQRAAAEVAALL.

Belongs to the flavin monoamine oxidase family. FAD is required as a cofactor.

This Mycobacterium tuberculosis (strain CDC 1551 / Oshkosh) protein is Putative flavin-containing monoamine oxidase AofH (aofH).